A 136-amino-acid chain; its full sequence is Magnetite biomineralization protein Mms6 (136 aa).

Over 1–85 the chain is Cytoplasmic; the sequence is MGEMEREGAT…AVGGTIWSGK (85 aa). Positions 86–95 are GL repeat; the sequence is GLALGLGMGL. A helical membrane pass occupies residues 86 to 106; the sequence is GLALGLGMGLGAWGPLILGVV. Over 107 to 136 the chain is Lumenal; the sequence is GAGAVYAYMKSRDIEAAQSDEEVELRDALS. The segment at 115-136 is MIC, self-assembles, binds magnetite, Fe(2+) and Fe(3+); that stretch reads MKSRDIEAAQSDEEVELRDALS.

It belongs to the magnetosome Mms6 family. Full length protein oligomerizes and interacts with MamA. Post-translationally, may undergo cleavage.

Its subcellular location is the magnetosome membrane. Promotes the formation of magnetite in Fe(2+)-rich conditions, when magnetite is not readily formed. Binds both Fe(2+) and Fe(3+). May help control the production of crystals with a specific morphology. May function with MamX, MamY amd MamZ in biomineralization. The 4 genes of this operon collectively influence magnetosome size and number. This is Magnetite biomineralization protein Mms6 from Magnetospirillum gryphiswaldense (strain DSM 6361 / JCM 21280 / NBRC 15271 / MSR-1).